Here is a 488-residue protein sequence, read N- to C-terminus: UDP-N-acetylmuramate--L-alanine ligase (488 aa).

129–135 (GSHGKTT) contacts ATP.

This sequence belongs to the MurCDEF family.

It is found in the cytoplasm. It catalyses the reaction UDP-N-acetyl-alpha-D-muramate + L-alanine + ATP = UDP-N-acetyl-alpha-D-muramoyl-L-alanine + ADP + phosphate + H(+). The protein operates within cell wall biogenesis; peptidoglycan biosynthesis. Its function is as follows. Cell wall formation. The protein is UDP-N-acetylmuramate--L-alanine ligase of Prochlorococcus marinus (strain MIT 9313).